The chain runs to 288 residues: Elongation factor Ts (288 aa).

The interval 82 to 85 is involved in Mg(2+) ion dislocation from EF-Tu; the sequence is TDFV.

This sequence belongs to the EF-Ts family.

It is found in the cytoplasm. Associates with the EF-Tu.GDP complex and induces the exchange of GDP to GTP. It remains bound to the aminoacyl-tRNA.EF-Tu.GTP complex up to the GTP hydrolysis stage on the ribosome. The sequence is that of Elongation factor Ts from Chlorobium limicola (strain DSM 245 / NBRC 103803 / 6330).